The following is a 633-amino-acid chain: NADPH-dependent diflavin oxidoreductase 1 (633 aa).

The Flavodoxin-like domain occupies 5 to 149 (CTIIYATESG…EVEKWSQELI (145 aa)). Residues 11–16 (TESGTS), 58–61 (STTG), and D131 contribute to the FMN site. The FAD-binding FR-type domain occupies 196–442 (TQFYKSKLKV…FIKESGARLP (247 aa)). Residues 377–380 (RPFS) and 412–415 (GLCS) each bind FAD. NADP(+) contacts are provided by residues T456, 520 to 521 (SR), 528 to 532 (KVYVQ), and D565. The interval 580-610 (KNNNNNNNNNNNNNNNNNNNNNNNNNDDENN) is disordered. Residues 581-604 (NNNNNNNNNNNNNNNNNNNNNNNN) show a composition bias toward low complexity. W633 provides a ligand contact to FAD.

It belongs to the NADPH-dependent diflavin oxidoreductase NDOR1 family. In the N-terminal section; belongs to the flavodoxin family. The protein in the C-terminal section; belongs to the flavoprotein pyridine nucleotide cytochrome reductase family. FAD serves as cofactor. Requires FMN as cofactor.

It is found in the cytoplasm. It catalyses the reaction 2 oxidized [2Fe-2S]-[protein] + NADPH = 2 reduced [2Fe-2S]-[protein] + NADP(+) + H(+). Functionally, NADPH-dependent reductase which is a central component of the cytosolic iron-sulfur (Fe-S) protein assembly (CIA) machinery. Transfers electrons from NADPH via its FAD and FMN prosthetic groups to the [2Fe-2S] cluster of the anamorsin/DRE2 homolog, another key component of the CIA machinery. In turn, this reduced cluster provides electrons for assembly of cytosolic iron-sulfur cluster proteins. This chain is NADPH-dependent diflavin oxidoreductase 1 (redC), found in Dictyostelium discoideum (Social amoeba).